Consider the following 245-residue polypeptide: Heavy metal-associated isoprenylated plant protein 1 (245 aa).

Positions 28 to 92 (PVHVVLKIDF…KLQKKSKKKV (65 aa)) constitute an HMA 1 domain. A metal cation-binding residues include Cys39 and Cys42. Residues 91 to 113 (KVELISPKPKKDTKENNEKKAND) are disordered. Residues 99-113 (PKKDTKENNEKKAND) are compositionally biased toward basic and acidic residues. The HMA 2 domain maps to 121–188 (VTTVVLKVNC…KLKKTVQVVP (68 aa)). A metal cation is bound by residues Cys132 and Cys135. A Cysteine methyl ester modification is found at Cys242. Cys242 is lipidated: S-farnesyl cysteine. Residues 243–245 (SVM) constitute a propeptide, removed in mature form.

Belongs to the HIPP family.

Heavy-metal-binding protein. The polypeptide is Heavy metal-associated isoprenylated plant protein 1 (Arabidopsis thaliana (Mouse-ear cress)).